The following is a 520-amino-acid chain: GMP synthase [glutamine-hydrolyzing] (520 aa).

The region spanning 4–202 is the Glutamine amidotransferase type-1 domain; that stretch reads KILILDFGSQ…VHDICGCGSD (199 aa). C81 serves as the catalytic Nucleophile. Active-site residues include H176 and E178. Positions 203–395 constitute a GMPS ATP-PPase domain; it reads WNMPDYVEEA…LGLPHDMVYR (193 aa). 230-236 provides a ligand contact to ATP; the sequence is SGGVDSS.

Homodimer.

The catalysed reaction is XMP + L-glutamine + ATP + H2O = GMP + L-glutamate + AMP + diphosphate + 2 H(+). Its pathway is purine metabolism; GMP biosynthesis; GMP from XMP (L-Gln route): step 1/1. Its function is as follows. Catalyzes the synthesis of GMP from XMP. The sequence is that of GMP synthase [glutamine-hydrolyzing] from Thiobacillus denitrificans (strain ATCC 25259 / T1).